The primary structure comprises 250 residues: UPF0309 protein BH0227 (250 aa).

One can recognise an SIS domain in the interval 31–214 (VAESIQNGGI…KRMADNGYEP (184 aa)).

This sequence belongs to the UPF0309 family.

This Halalkalibacterium halodurans (strain ATCC BAA-125 / DSM 18197 / FERM 7344 / JCM 9153 / C-125) (Bacillus halodurans) protein is UPF0309 protein BH0227.